Here is a 510-residue protein sequence, read N- to C-terminus: Probable RNA-binding protein 46 (510 aa).

A disordered region spans residues 23–42; it reads ENGQRKFGGPPPGWEGPPPP. Over residues 31-42 the composition is skewed to pro residues; it reads GPPPGWEGPPPP. 3 RRM domains span residues 45 to 123, 125 to 207, and 220 to 292; these read REVF…VSLD, CRLF…WAEP, and RVLY…LAKP.

Expressed in the testis and ovary.

The protein resides in the cytoplasm. Its function is as follows. Essential for male and female fertility, playing a crucial role in regulating germ cell development by ensuring the proper progression of meiosis prophase I. In Danio rerio (Zebrafish), this protein is Probable RNA-binding protein 46 (rbm46).